Here is a 219-residue protein sequence, read N- to C-terminus: MCPARSLLLVATLVLLDYLSLARNLSVATPGPEMFPCLHHSQNLLKAACNTLQKARQILEFYPCTSEEIDHEDITKDKTSTVEACLPLELIKNESCLNSRETSVITNGSCLASRKTSFMMALCLRSIYEDLKIYQVEFKTMNAKLLMDPKRQIFLDQNILGVIDELMQALNFNSETVPQKSSLEEPDFYKTKIKLCILLHAFKIRAVTIDRVMSYLNAS.

A signal peptide spans 1–22 (MCPARSLLLVATLVLLDYLSLA). 3 N-linked (GlcNAc...) asparagine glycosylation sites follow: Asn-24, Asn-93, and Asn-107. Cystine bridges form between Cys-37–Cys-110, Cys-64–Cys-196, and Cys-85–Cys-123.

The protein belongs to the IL-6 superfamily. Heterodimer with IL12B; disulfide-linked. This heterodimer is known as interleukin IL-12. Heterodimer with EBI3/IL27B; not disulfide-linked. This heterodimer is known as interleukin IL-35. Interacts with NBR1; this interaction promotes IL-12 secretion.

Its subcellular location is the secreted. Functionally, heterodimerizes with IL12B to form the IL-12 cytokine or with EBI3/IL27B to form the IL-35 cytokine. IL-12 is primarily produced by professional antigen-presenting cells (APCs) such as B-cells and dendritic cells (DCs) as well as macrophages and granulocytes and regulates T-cell and natural killer-cell responses, induces the production of interferon-gamma (IFN-gamma), favors the differentiation of T-helper 1 (Th1) cells and is an important link between innate resistance and adaptive immunity. Mechanistically, exerts its biological effects through a receptor composed of IL12R1 and IL12R2 subunits. Binding to the receptor results in the rapid tyrosine phosphorylation of a number of cellular substrates including the JAK family kinases TYK2 and JAK2. In turn, recruited STAT4 gets phosphorylated and translocates to the nucleus where it regulates cytokine/growth factor responsive genes. As part of IL-35, plays essential roles in maintaining the immune homeostasis of the liver microenvironment and also functions as an immune-suppressive cytokine. Mediates biological events through unconventional receptors composed of IL12RB2 and gp130/IL6ST heterodimers or homodimers. Signaling requires the transcription factors STAT1 and STAT4, which form a unique heterodimer that binds to distinct DNA sites. The sequence is that of Interleukin-12 subunit alpha (IL12A) from Cercocebus atys (Sooty mangabey).